A 199-amino-acid chain; its full sequence is 7-methyl-GTP pyrophosphatase (199 aa).

Aspartate 74 acts as the Proton acceptor in catalysis.

The protein belongs to the Maf family. YceF subfamily. A divalent metal cation is required as a cofactor.

It localises to the cytoplasm. It catalyses the reaction N(7)-methyl-GTP + H2O = N(7)-methyl-GMP + diphosphate + H(+). Functionally, nucleoside triphosphate pyrophosphatase that hydrolyzes 7-methyl-GTP (m(7)GTP). May have a dual role in cell division arrest and in preventing the incorporation of modified nucleotides into cellular nucleic acids. The chain is 7-methyl-GTP pyrophosphatase from Albidiferax ferrireducens (strain ATCC BAA-621 / DSM 15236 / T118) (Rhodoferax ferrireducens).